A 62-amino-acid chain; its full sequence is Sperm protamine P1 (62 aa).

The interval Met1 to Cys62 is disordered.

The protein belongs to the protamine P1 family. In terms of tissue distribution, testis.

It is found in the nucleus. The protein localises to the chromosome. In terms of biological role, protamines substitute for histones in the chromatin of sperm during the haploid phase of spermatogenesis. They compact sperm DNA into a highly condensed, stable and inactive complex. In Planigale ingrami (Long-tailed planigale), this protein is Sperm protamine P1 (PRM1).